We begin with the raw amino-acid sequence, 641 residues long: Phosphomethylpyrimidine synthase (641 aa).

Residues Asn221, Met250, Tyr279, His315, 335 to 337, 376 to 379, and Glu415 each bind substrate; these read SRG and DGLR. Position 419 (His419) interacts with Zn(2+). Tyr442 lines the substrate pocket. Position 483 (His483) interacts with Zn(2+). [4Fe-4S] cluster-binding residues include Cys563, Cys566, and Cys571.

Belongs to the ThiC family. In terms of assembly, homodimer. [4Fe-4S] cluster serves as cofactor.

It carries out the reaction 5-amino-1-(5-phospho-beta-D-ribosyl)imidazole + S-adenosyl-L-methionine = 4-amino-2-methyl-5-(phosphooxymethyl)pyrimidine + CO + 5'-deoxyadenosine + formate + L-methionine + 3 H(+). The protein operates within cofactor biosynthesis; thiamine diphosphate biosynthesis. Catalyzes the synthesis of the hydroxymethylpyrimidine phosphate (HMP-P) moiety of thiamine from aminoimidazole ribotide (AIR) in a radical S-adenosyl-L-methionine (SAM)-dependent reaction. The protein is Phosphomethylpyrimidine synthase of Rhodopseudomonas palustris (strain BisA53).